Here is a 348-residue protein sequence, read N- to C-terminus: Erlin-1 (348 aa).

Topologically, residues 1–7 (MNMTQAR) are cytoplasmic. The helical transmembrane segment at 8 to 28 (LLVAAVVGLVAILLYASIHKI) threads the bilayer. Residues 29–348 (EEGHLAVYYR…SPIQNKENAG (320 aa)) are Lumenal-facing. N108 is a glycosylation site (N-linked (GlcNAc...) asparagine). An N6-acetyllysine modification is found at K269. Basic and acidic residues predominate over residues 318–336 (DGRTGREDSLPPEEAREPS). A disordered region spans residues 318–348 (DGRTGREDSLPPEEAREPSGESPIQNKENAG). Residues 339-348 (SPIQNKENAG) show a composition bias toward polar residues.

This sequence belongs to the band 7/mec-2 family. As to quaternary structure, forms a heteromeric complex with ERLIN2. In complex with ERLIN2, interacts with RNF170. Interacts with AMFR and SYVN1. Deubiquitinated by USP25; leading to stabilization.

The protein resides in the endoplasmic reticulum membrane. Functionally, component of the ERLIN1/ERLIN2 complex which mediates the endoplasmic reticulum-associated degradation (ERAD) of inositol 1,4,5-trisphosphate receptors (IP3Rs). Involved in regulation of cellular cholesterol homeostasis by regulation the SREBP signaling pathway. Binds cholesterol and may promote ER retention of the SCAP-SREBF complex. The sequence is that of Erlin-1 from Mus musculus (Mouse).